The sequence spans 593 residues: Tyrosine-protein phosphatase non-receptor type 11 (593 aa).

Thr-2 is modified (N-acetylthreonine). 2 consecutive SH2 domains span residues 6-102 and 112-216; these read WFHP…KYPL and WFHG…KQPL. 2 positions are modified to phosphotyrosine: Tyr-62 and Tyr-66. The Tyrosine-protein phosphatase domain maps to 247–521; the sequence is FWEEFETLQQ…RFIYMAVQHY (275 aa). Substrate is bound by residues Asp-425, 459–465, and Gln-506; that span reads CSAGIGR. The active-site Phosphocysteine intermediate is Cys-459. Tyr-542 and Tyr-580 each carry phosphotyrosine; by PDGFR.

The protein belongs to the protein-tyrosine phosphatase family. Non-receptor class 2 subfamily. As to quaternary structure, interacts with CD84 and with phosphorylated SIT1 and MZPL1. Interacts with FCRL4, FCRL6 and ANKHD1. Interacts with GAREM1 (tyrosine phosphorylated); the interaction increases MAPK/ERK activity and does not affect the GRB2/SOS complex formation. Interacts with PTPNS1 and BCAR3. Interacts with phosphorylated LIME1. Interacts with SHB and INPP5D/SHIP1. Interacts with KIR2DL1; the interaction is enhanced by ARRB2. Interacts with GAB2. Interacts with TERT; the interaction retains TERT in the nucleus. Interacts with PECAM1 and FER. Interacts with EPHA2 (activated); participates in PTK2/FAK1 dephosphorylation in EPHA2 downstream signaling. Interacts with MILR1 (tyrosine phosphorylated). Interacts with FLT1 (tyrosine-phosphorylated), FLT3 (tyrosine-phosphorylated), FLT4 (tyrosine-phosphorylated), KIT and GRB2. Interacts with ROS1; mediates PTPN11 phosphorylation. Interacts with PDGFRA (tyrosine phosphorylated). Interacts with PDGFRB (tyrosine phosphorylated); this interaction increases the PTPN11 phosphatase activity. Interacts (via SH2 domain) with TEK/TIE2 (tyrosine phosphorylated). Interacts with CEACAM1 (via cytoplasmic domain); this interaction depends on the monomer/dimer equilibrium and is phosphorylation-dependent. Interacts with MPIG6B (via ITIM motif). Interacts with SIGLEC10. Interacts with Lilrb4a (when tyrosine phosphorylated). Interacts with SIGLEC10. Interacts with CLEC12B (via ITIM motif); this interaction triggers dephosphorylation and activation of PTPN11. Interacts (via SH2 domains) with NEDD9/CAS-L; the interaction is enhanced when NEDD9/CAS-L is tyrosine phosphorylated. Interacts with PIRB; when PIRB is phosphorylated by LYN at 'Tyr-794' and 'Tyr-824'. Phosphorylated on Tyr-542 and Tyr-580 upon receptor protein tyrosine kinase activation; which creates a binding site for GRB2 and other SH2-containing proteins. Phosphorylated upon activation of the receptor-type kinase FLT3. Phosphorylated by activated PDGFRB. Phosphorylated upon activation of the receptor-type kinase PDGFRA. As to expression, highly expressed in brain, heart and kidney.

It localises to the cytoplasm. The catalysed reaction is O-phospho-L-tyrosyl-[protein] + H2O = L-tyrosyl-[protein] + phosphate. Acts downstream of various receptor and cytoplasmic protein tyrosine kinases to participate in the signal transduction from the cell surface to the nucleus. Positively regulates MAPK signal transduction pathway. Dephosphorylates GAB1, ARHGAP35 and EGFR. Dephosphorylates ROCK2 at 'Tyr-722' resulting in stimulation of its RhoA binding activity. Dephosphorylates CDC73. Dephosphorylates SOX9 on tyrosine residues, leading to inactivate SOX9 and promote ossification. Dephosphorylates tyrosine-phosphorylated NEDD9/CAS-L. This Mus musculus (Mouse) protein is Tyrosine-protein phosphatase non-receptor type 11 (Ptpn11).